Here is a 320-residue protein sequence, read N- to C-terminus: Phosphate acetyltransferase (320 aa).

Belongs to the phosphate acetyltransferase and butyryltransferase family.

The protein localises to the cytoplasm. It catalyses the reaction acetyl-CoA + phosphate = acetyl phosphate + CoA. Its pathway is metabolic intermediate biosynthesis; acetyl-CoA biosynthesis; acetyl-CoA from acetate: step 2/2. This chain is Phosphate acetyltransferase (pta), found in Mycoplasma genitalium (strain ATCC 33530 / DSM 19775 / NCTC 10195 / G37) (Mycoplasmoides genitalium).